The chain runs to 269 residues: MIVALTNDDGIQAPGLRAMYKALLDAGHEVHVVAPVTEQSAVGHAVTISLPLRVKEFHENGFRGRGVYGTPTDCVKLGLSCLLDKKPDVVVSGINAGANVGPDILYSGTVSAATEAAHMGYPALAVSYDSFRPADLSGQAAHAAGLLATLDWQALPARCVVNLNYPAVPMPEVKGVRACPQTRAVWKDWYDHRTDPRGGSYWWLNGVIPPETVAPGTDRALLTEGWITLTPLRFDFTDHEAMDVLARVQGDGVGGQANAQTGGQTGGGI.

D8, D9, S40, and N95 together coordinate a divalent metal cation.

It belongs to the SurE nucleotidase family. A divalent metal cation is required as a cofactor.

It is found in the cytoplasm. It carries out the reaction a ribonucleoside 5'-phosphate + H2O = a ribonucleoside + phosphate. Functionally, nucleotidase that shows phosphatase activity on nucleoside 5'-monophosphates. The polypeptide is 5'-nucleotidase SurE (Nitratidesulfovibrio vulgaris (strain DSM 19637 / Miyazaki F) (Desulfovibrio vulgaris)).